A 93-amino-acid chain; its full sequence is uncharacterized protein (93 aa).

2 helical membrane passes run 8-28 (FIGI…LLAS) and 54-74 (ACFL…YLIL).

The protein resides in the cell membrane. This is an uncharacterized protein from Methanocaldococcus jannaschii (strain ATCC 43067 / DSM 2661 / JAL-1 / JCM 10045 / NBRC 100440) (Methanococcus jannaschii).